The chain runs to 554 residues: Condensin-2 complex subunit H2 (554 aa).

5 positions are modified to phosphoserine: Ser-45, Ser-178, Ser-182, Ser-199, and Ser-200. The segment at 154-296 (PVDVHPMPRS…GQKRKRKGAT (143 aa)) is disordered. A compositionally biased stretch (polar residues) spans 179-191 (RNGSPVSVRSISQ). Over residues 201-210 (GDEDAEDVAE) the composition is skewed to acidic residues. At Ser-441 the chain carries Phosphoserine.

It belongs to the CND2 H2 (condensin-2 subunit 2) family. Component of the condensin-2 complex, which contains the SMC2 and SMC4 heterodimer, and three non SMC subunits, NCAPG2, NCAPH2 and NCAPD3 that probably regulate the complex.

It is found in the nucleus. Functionally, regulatory subunit of the condensin-2 complex, a complex that seems to provide chromosomes with an additional level of organization and rigidity and in establishing mitotic chromosome architecture. May promote the resolution of double-strand DNA catenanes (intertwines) between sister chromatids. Condensin-mediated compaction likely increases tension in catenated sister chromatids, providing directionality for type II topoisomerase-mediated strand exchanges toward chromatid decatenation. Required for decatenation of chromatin bridges at anaphase. Early in neurogenesis, may play an essential role to ensure accurate mitotic chromosome condensation in neuron stem cells, ultimately affecting neuron pool and cortex size. Seems to have lineage-specific role in T-cell development. In Rattus norvegicus (Rat), this protein is Condensin-2 complex subunit H2 (Ncaph2).